The primary structure comprises 607 residues: Protein PLASTID MOVEMENT IMPAIRED 2 (607 aa).

Coiled-coil stretches lie at residues K66–L295 and M329–R445.

It belongs to the WEB family. Interacts with WEB1. In terms of tissue distribution, ubiquitous but preferentially in chloroplast-containing tissues.

The protein resides in the cytoplasm. Required for the chloroplast avoidance response under high intensity blue light. This avoidance response consists in the relocation of chloroplasts on the anticlinal side of exposed cells. Acts in association with WEB1 to maintain the velocity of chloroplast photorelocation movement via cp-actin filaments regulation. The polypeptide is Protein PLASTID MOVEMENT IMPAIRED 2 (PMI2) (Arabidopsis thaliana (Mouse-ear cress)).